The sequence spans 529 residues: Intraflagellar transport protein 56 (529 aa).

Residues 1–21 form a disordered region; it reads MLHNRMTTAFERSKEQEHEAA. Basic and acidic residues predominate over residues 11-21; the sequence is ERSKEQEHEAA. 6 TPR repeats span residues 57–90, 154–187, 189–221, 285–321, 359–392, and 428–461; these read GNAD…KNPP, SADQ…QPEC, AIYM…AEDS, SEAR…EYTL, VLGR…PKES, and PVHR…SLQT.

The protein belongs to the IFT56 family.

The protein resides in the cell projection. It localises to the cilium. The protein localises to the flagellum. It is found in the cytoplasm. Its subcellular location is the cytoskeleton. The protein resides in the flagellum axoneme. It localises to the flagellum basal body. Its function is as follows. Component of the intraflagellar transport complex B (IFT-B) involved in flagellar assembly. The sequence is that of Intraflagellar transport protein 56 from Giardia intestinalis (strain ATCC 50803 / WB clone C6) (Giardia lamblia).